The chain runs to 508 residues: Photosystem II CP47 reaction center protein (508 aa).

6 consecutive transmembrane segments (helical) span residues 21–36, 101–115, 140–156, 203–218, 237–252, and 457–472; these read SVHI…WAGS, IVFS…IWHW, GIHL…FGAF, IAAG…FHLS, VLSS…AFVV, and SFAL…HGAR.

This sequence belongs to the PsbB/PsbC family. PsbB subfamily. PSII is composed of 1 copy each of membrane proteins PsbA, PsbB, PsbC, PsbD, PsbE, PsbF, PsbH, PsbI, PsbJ, PsbK, PsbL, PsbM, PsbT, PsbX, PsbY, PsbZ, Psb30/Ycf12, at least 3 peripheral proteins of the oxygen-evolving complex and a large number of cofactors. It forms dimeric complexes. Binds multiple chlorophylls. PSII binds additional chlorophylls, carotenoids and specific lipids. serves as cofactor.

It localises to the plastid. It is found in the chloroplast thylakoid membrane. Its function is as follows. One of the components of the core complex of photosystem II (PSII). It binds chlorophyll and helps catalyze the primary light-induced photochemical processes of PSII. PSII is a light-driven water:plastoquinone oxidoreductase, using light energy to abstract electrons from H(2)O, generating O(2) and a proton gradient subsequently used for ATP formation. The polypeptide is Photosystem II CP47 reaction center protein (Eucalyptus globulus subsp. globulus (Tasmanian blue gum)).